A 390-amino-acid chain; its full sequence is Chorismate synthase (390 aa).

NADP(+)-binding residues include arginine 40 and arginine 46. Residues 128 to 130, 251 to 252, glycine 296, 311 to 315, and arginine 339 contribute to the FMN site; these read RAS, QA, and KPIPT.

The protein belongs to the chorismate synthase family. As to quaternary structure, homotetramer. It depends on FMNH2 as a cofactor.

It carries out the reaction 5-O-(1-carboxyvinyl)-3-phosphoshikimate = chorismate + phosphate. The protein operates within metabolic intermediate biosynthesis; chorismate biosynthesis; chorismate from D-erythrose 4-phosphate and phosphoenolpyruvate: step 7/7. Functionally, catalyzes the anti-1,4-elimination of the C-3 phosphate and the C-6 proR hydrogen from 5-enolpyruvylshikimate-3-phosphate (EPSP) to yield chorismate, which is the branch point compound that serves as the starting substrate for the three terminal pathways of aromatic amino acid biosynthesis. This reaction introduces a second double bond into the aromatic ring system. The sequence is that of Chorismate synthase from Sulfurihydrogenibium sp. (strain YO3AOP1).